Consider the following 201-residue polypeptide: Imidazole glycerol phosphate synthase subunit HisH (201 aa).

The Glutamine amidotransferase type-1 domain maps to 1–201 (MIIVIDYDAG…ILKKFVDLCD (201 aa)). Cys-79 functions as the Nucleophile in the catalytic mechanism. Residues His-181 and Glu-183 contribute to the active site.

In terms of assembly, heterodimer of HisH and HisF.

It localises to the cytoplasm. It carries out the reaction 5-[(5-phospho-1-deoxy-D-ribulos-1-ylimino)methylamino]-1-(5-phospho-beta-D-ribosyl)imidazole-4-carboxamide + L-glutamine = D-erythro-1-(imidazol-4-yl)glycerol 3-phosphate + 5-amino-1-(5-phospho-beta-D-ribosyl)imidazole-4-carboxamide + L-glutamate + H(+). The catalysed reaction is L-glutamine + H2O = L-glutamate + NH4(+). Its pathway is amino-acid biosynthesis; L-histidine biosynthesis; L-histidine from 5-phospho-alpha-D-ribose 1-diphosphate: step 5/9. In terms of biological role, IGPS catalyzes the conversion of PRFAR and glutamine to IGP, AICAR and glutamate. The HisH subunit catalyzes the hydrolysis of glutamine to glutamate and ammonia as part of the synthesis of IGP and AICAR. The resulting ammonia molecule is channeled to the active site of HisF. The polypeptide is Imidazole glycerol phosphate synthase subunit HisH (Streptococcus mutans serotype c (strain ATCC 700610 / UA159)).